A 236-amino-acid chain; its full sequence is Phosphoribosylaminoimidazole-succinocarboxamide synthase (236 aa).

Belongs to the SAICAR synthetase family.

It catalyses the reaction 5-amino-1-(5-phospho-D-ribosyl)imidazole-4-carboxylate + L-aspartate + ATP = (2S)-2-[5-amino-1-(5-phospho-beta-D-ribosyl)imidazole-4-carboxamido]succinate + ADP + phosphate + 2 H(+). It participates in purine metabolism; IMP biosynthesis via de novo pathway; 5-amino-1-(5-phospho-D-ribosyl)imidazole-4-carboxamide from 5-amino-1-(5-phospho-D-ribosyl)imidazole-4-carboxylate: step 1/2. In Pseudomonas savastanoi pv. phaseolicola (strain 1448A / Race 6) (Pseudomonas syringae pv. phaseolicola (strain 1448A / Race 6)), this protein is Phosphoribosylaminoimidazole-succinocarboxamide synthase.